We begin with the raw amino-acid sequence, 1189 residues long: Zinc finger CCCH domain-containing protein 6 (1189 aa).

The span at 1–12 (MTDSEHAGHDRE) shows a compositional bias: basic and acidic residues. The disordered stretch occupies residues 1-105 (MTDSEHAGHD…HKKRTGFYRD (105 aa)). Over residues 13–28 (DGELEDGEIDDAGFEE) the composition is skewed to acidic residues. Residues 27–73 (EEIQEKEAKENEKQKSEKAYRKSRKKHKKEREKKKSKRRKREKHKHN) adopt a coiled-coil conformation. A compositionally biased stretch (basic and acidic residues) spans 29–46 (IQEKEAKENEKQKSEKAY). The segment covering 47–73 (RKSRKKHKKEREKKKSKRRKREKHKHN) has biased composition (basic residues). 3 C3H1-type zinc fingers span residues 273–299 (KGKQ…HDAE), 301–328 (EKRK…HNEF), and 329–352 (PCKF…HDDL). Residues 353–385 (TKETKKLLDKVLNTDEELINEDERELEELRKRG) are a coiled coil. Disordered regions lie at residues 451–530 (FYTS…GPQN), 630–659 (PPVV…PVPG), 676–755 (YQED…GNQV), 947–1026 (LEQF…PYAP), and 1051–1189 (PRDH…SPFC). The segment covering 461-478 (QFQGSSPHPQHIYSSGSS) has biased composition (low complexity). A compositionally biased stretch (pro residues) spans 505-525 (AGPPGLPVPQSPPLPPGPPEI). Positions 639 to 659 (HGSGSDGSSTRTGHGPLPVPG) are enriched in low complexity. Over residues 718–741 (KTLQKQTETLRNQQQPSTELSTPT) the composition is skewed to polar residues. The segment covering 961–973 (GDPRLQKNFDPRL) has biased composition (basic and acidic residues). Composition is skewed to low complexity over residues 1009-1020 (SGAGTSNSGSGA) and 1056-1069 (SSST…SSGE). Serine 1158 carries the phosphoserine modification. Basic and acidic residues predominate over residues 1164 to 1179 (DPGRETDDKSLKEVFK).

The polypeptide is Zinc finger CCCH domain-containing protein 6 (ZC3H6) (Homo sapiens (Human)).